A 619-amino-acid polypeptide reads, in one-letter code: Kininogen-2 (619 aa).

The N-terminal stretch at 1–18 is a signal peptide; the sequence is MKLITILFLCSRLLPSLT. Gln-19 carries the post-translational modification Pyrrolidone carboxylic acid. The Cystatin kininogen-type 1 domain occupies 27 to 131; sequence CNDQDVFKAV…IQTCLITPAE (105 aa). Disulfide bonds link Cys-27/Cys-589, Cys-82/Cys-93, Cys-106/Cys-125, Cys-141/Cys-144, Cys-205/Cys-217, Cys-228/Cys-247, Cys-261/Cys-264, Cys-325/Cys-337, and Cys-348/Cys-367. Asn-87 carries N-linked (GlcNAc...) asparagine glycosylation. The O-linked (GalNAc...) threonine; partial glycan is linked to Thr-136. Residues 150 to 253 form the Cystatin kininogen-type 2 domain; that stretch reads TKSPDLEPVL…SQKCDLYPGE (104 aa). 2 N-linked (GlcNAc...) asparagine glycosylation sites follow: Asn-168 and Asn-169. N-linked (GlcNAc...) asparagine; partial glycosylation occurs at Asn-197. N-linked (GlcNAc...) asparagine glycosylation is present at Asn-204. Residues 270 to 373 enclose the Cystatin kininogen-type 3 domain; sequence VDSPDLEEAL…TVNCQPLGQT (104 aa). A glycan (N-linked (GlcNAc...) asparagine) is linked at Asn-280. 4-hydroxyproline is present on Pro-380. The interval 394-495 is disordered; that stretch reads EGSTTVSLPH…GKNNGKHYDW (102 aa). The O-linked (GalNAc...) serine glycan is linked to Ser-396. O-linked (GalNAc...) threonine glycosylation is found at Thr-397 and Thr-398. 2 O-linked (GalNAc...) serine glycosylation sites follow: Ser-400 and Ser-404. A compositionally biased stretch (basic residues) spans 442–490; that stretch reads GHKHKHDQGHGHHRSHGLGHGHQKQHGLGHGHKHGHGHGKHKNKGKNNG. O-linked (GalNAc...) serine glycosylation occurs at Ser-510. Residues Thr-518, Thr-522, Thr-534, Thr-546, Thr-551, and Thr-568 are each glycosylated (O-linked (GalNAc...) threonine).

Bradykinin is released from kininogen by plasma kallikrein. As to expression, plasma.

It is found in the secreted. The protein resides in the extracellular space. In terms of biological role, (1) Kininogens are inhibitors of thiol proteases; (2) HMW-kininogen plays an important role in blood coagulation by helping to position optimally prekallikrein and factor XI next to factor XII; (3) HMW-kininogen inhibits the thrombin- and plasmin-induced aggregation of thrombocytes; (4) the active peptide bradykinin that is released from HMW-kininogen shows a variety of physiological effects: (4A) influence in smooth muscle contraction, (4B) induction of hypotension, (4C) natriuresis and diuresis, (4D) decrease in blood glucose level, (4E) it is a mediator of inflammation and causes (4E1) increase in vascular permeability, (4E2) stimulation of nociceptors (4E3) release of other mediators of inflammation (e.g. prostaglandins), (4F) it has a cardioprotective effect (directly via bradykinin action, indirectly via endothelium-derived relaxing factor action); (5) LMW-kininogen inhibits the aggregation of thrombocytes; (6) LMW-kininogen is in contrast to HMW-kininogen not involved in blood clotting. The protein is Kininogen-2 (KNG2) of Bos taurus (Bovine).